Consider the following 91-residue polypeptide: Small ribosomal subunit protein uS19 (91 aa).

The protein belongs to the universal ribosomal protein uS19 family.

Functionally, protein S19 forms a complex with S13 that binds strongly to the 16S ribosomal RNA. In Metamycoplasma arthritidis (strain 158L3-1) (Mycoplasma arthritidis), this protein is Small ribosomal subunit protein uS19.